The following is a 1343-amino-acid chain: DNA-directed RNA polymerase subunit beta (1343 aa).

The protein belongs to the RNA polymerase beta chain family. The RNAP catalytic core consists of 2 alpha, 1 beta, 1 beta' and 1 omega subunit. When a sigma factor is associated with the core the holoenzyme is formed, which can initiate transcription.

It catalyses the reaction RNA(n) + a ribonucleoside 5'-triphosphate = RNA(n+1) + diphosphate. DNA-dependent RNA polymerase catalyzes the transcription of DNA into RNA using the four ribonucleoside triphosphates as substrates. This is DNA-directed RNA polymerase subunit beta from Shewanella piezotolerans (strain WP3 / JCM 13877).